Reading from the N-terminus, the 160-residue chain is Transcriptional repressor NrdR (160 aa).

Positions 1–11 (MRCPSCSSLDT) are enriched in polar residues. The disordered stretch occupies residues 1–20 (MRCPSCSSLDTQVKDSRPTE). A zinc finger spans residues 3–34 (CPSCSSLDTQVKDSRPTEDSSVIRRRRVCLAC). Residues 49–139 (LTVIKRNGRR…VYRNFREAKD (91 aa)) form the ATP-cone domain.

The protein belongs to the NrdR family. Zn(2+) is required as a cofactor.

Negatively regulates transcription of bacterial ribonucleotide reductase nrd genes and operons by binding to NrdR-boxes. The sequence is that of Transcriptional repressor NrdR from Rhodopseudomonas palustris (strain BisA53).